Consider the following 133-residue polypeptide: Large ribosomal subunit protein bL20 (133 aa).

This sequence belongs to the bacterial ribosomal protein bL20 family.

Its function is as follows. Binds directly to 23S ribosomal RNA and is necessary for the in vitro assembly process of the 50S ribosomal subunit. It is not involved in the protein synthesizing functions of that subunit. The chain is Large ribosomal subunit protein bL20 from Mesorhizobium japonicum (strain LMG 29417 / CECT 9101 / MAFF 303099) (Mesorhizobium loti (strain MAFF 303099)).